We begin with the raw amino-acid sequence, 305 residues long: Probable cell division protein WhiA (305 aa).

Residues 272–305 constitute a DNA-binding region (H-T-H motif); sequence SIQQLADSLTVPITKSGVNHRLRKINKIADELTD.

Belongs to the WhiA family.

Its function is as follows. Involved in cell division and chromosome segregation. The sequence is that of Probable cell division protein WhiA from Streptococcus suis (strain 98HAH33).